The following is a 162-amino-acid chain: Cyclic pyranopterin monophosphate synthase (162 aa).

Residues 75–77 (LCH) and 113–114 (ME) contribute to the substrate site. Asp-128 is a catalytic residue.

The protein belongs to the MoaC family. Homohexamer; trimer of dimers.

It carries out the reaction (8S)-3',8-cyclo-7,8-dihydroguanosine 5'-triphosphate = cyclic pyranopterin phosphate + diphosphate. It participates in cofactor biosynthesis; molybdopterin biosynthesis. Catalyzes the conversion of (8S)-3',8-cyclo-7,8-dihydroguanosine 5'-triphosphate to cyclic pyranopterin monophosphate (cPMP). The sequence is that of Cyclic pyranopterin monophosphate synthase from Burkholderia ambifaria (strain ATCC BAA-244 / DSM 16087 / CCUG 44356 / LMG 19182 / AMMD) (Burkholderia cepacia (strain AMMD)).